Reading from the N-terminus, the 239-residue chain is Serine protease SplC (239 aa).

The first 36 residues, 1–36 (MNKNIVIKSMAALAILTSVTGINAAVVEETQQIANA), serve as a signal peptide directing secretion. Residues histidine 75, aspartate 113, and serine 193 each act as charge relay system in the active site.

It belongs to the peptidase S1B family.

It localises to the secreted. In Staphylococcus aureus (strain USA300 / TCH1516), this protein is Serine protease SplC (splC).